The chain runs to 658 residues: UvrABC system protein C (658 aa).

Residues 62-140 (PKPGVYRMLD…IKRFRPPYNV (79 aa)) form the GIY-YIG domain. The UVR domain occupies 250–285 (GAVQREIEAQMHKAAEDLDFERAAMLRDRLRAATFI).

This sequence belongs to the UvrC family. Interacts with UvrB in an incision complex.

It is found in the cytoplasm. The UvrABC repair system catalyzes the recognition and processing of DNA lesions. UvrC both incises the 5' and 3' sides of the lesion. The N-terminal half is responsible for the 3' incision and the C-terminal half is responsible for the 5' incision. This is UvrABC system protein C from Novosphingobium aromaticivorans (strain ATCC 700278 / DSM 12444 / CCUG 56034 / CIP 105152 / NBRC 16084 / F199).